Here is a 213-residue protein sequence, read N- to C-terminus: Eukaryotic translation initiation factor 4E (213 aa).

Phosphoserine; by CK2 occurs at positions 2 and 15. Thr-22 is subject to Phosphothreonine. Phosphoserine is present on residues Ser-28 and Ser-30. A Glycyl lysine isopeptide (Lys-Gly) (interchain with G-Cter in ubiquitin) cross-link involves residue Lys-114.

Belongs to the eukaryotic initiation factor 4E family. In terms of assembly, component of the eIF4F complex, which composition varies with external and internal environmental conditions. It is composed of at least eIF4A (TIF1/TIF2), eIF4E (TIF45) and eIF4G (TIF4631 or TIF4632). Interacts with PAT1 in a RNA-dependent manner. eIF4E is also known to interact with other partners.

It is found in the cytoplasm. The protein resides in the nucleus. Its function is as follows. Recognizes and binds the 7-methylguanosine (m7G)-containing mRNA cap during an early step in the initiation of protein synthesis and facilitates ribosome binding by inducing the unwinding of the mRNAs secondary structures. The sequence is that of Eukaryotic translation initiation factor 4E (CDC33) from Saccharomyces cerevisiae (strain ATCC 204508 / S288c) (Baker's yeast).